Here is a 361-residue protein sequence, read N- to C-terminus: Phospho-N-acetylmuramoyl-pentapeptide-transferase (361 aa).

10 helical membrane-spanning segments follow: residues 27–47, 70–90, 97–117, 134–154, 167–187, 199–219, 236–256, 263–283, 288–308, and 338–358; these read ILAS…MIRW, GTPT…CLLW, SLWL…VDDY, YFWQ…NASL, TVTW…IVGS, GLAI…AYAS, TGEL…FLWY, VFMG…VAVV, LVLL…ILQV, and KVIV…LATL.

The protein belongs to the glycosyltransferase 4 family. MraY subfamily. It depends on Mg(2+) as a cofactor.

It is found in the cell inner membrane. The enzyme catalyses UDP-N-acetyl-alpha-D-muramoyl-L-alanyl-gamma-D-glutamyl-meso-2,6-diaminopimeloyl-D-alanyl-D-alanine + di-trans,octa-cis-undecaprenyl phosphate = di-trans,octa-cis-undecaprenyl diphospho-N-acetyl-alpha-D-muramoyl-L-alanyl-D-glutamyl-meso-2,6-diaminopimeloyl-D-alanyl-D-alanine + UMP. Its pathway is cell wall biogenesis; peptidoglycan biosynthesis. Its function is as follows. Catalyzes the initial step of the lipid cycle reactions in the biosynthesis of the cell wall peptidoglycan: transfers peptidoglycan precursor phospho-MurNAc-pentapeptide from UDP-MurNAc-pentapeptide onto the lipid carrier undecaprenyl phosphate, yielding undecaprenyl-pyrophosphoryl-MurNAc-pentapeptide, known as lipid I. The protein is Phospho-N-acetylmuramoyl-pentapeptide-transferase of Legionella pneumophila subsp. pneumophila (strain Philadelphia 1 / ATCC 33152 / DSM 7513).